The chain runs to 409 residues: Histidine--tRNA ligase (409 aa).

The protein belongs to the class-II aminoacyl-tRNA synthetase family.

The protein resides in the cytoplasm. The enzyme catalyses tRNA(His) + L-histidine + ATP = L-histidyl-tRNA(His) + AMP + diphosphate + H(+). The sequence is that of Histidine--tRNA ligase from Methanosphaerula palustris (strain ATCC BAA-1556 / DSM 19958 / E1-9c).